The following is a 91-amino-acid chain: HssA/B-like protein 52 (91 aa).

Disordered regions lie at residues 1-20 (MTLF…SKSS) and 72-91 (GGCG…CCGI).

The protein belongs to the hssA/B family.

The chain is HssA/B-like protein 52 (hssl52) from Dictyostelium discoideum (Social amoeba).